Reading from the N-terminus, the 356-residue chain is MSLLSDLINLNLSESTEKIIAEYIWVGGSGMDLRSKARTLPGPVDDPAKLPKWNYDGSSTDQAPGDDSEVILYPQAIFKDPFRRGNNILVICDVYTPAGEPLPTNKRYDAAKIFSHPDVVAEVPWYGIEQEYTLLQKDVNWPLGWPLGGYPGPQGPYYCGVGADKAYGRDIVDAHYKACVYAGINISGINGEVMPGQWEFQVGPSVGISAGDEVWAARYILERITELAGAVVSFDPKPIPGDWNGAGAHSNYSTKSMREEGGYEVIKKAIEKLGLRHKEHIAAYGKGNERRLTGRHETADINTFSWGVANRGSSVRVGRDTEKQGKGYFEDRRPASNMDPYVVTSMIAETTILWKP.

One can recognise a GS beta-grasp domain in the interval I19–G99. Positions A37–D66 are disordered. Positions K106–P356 constitute a GS catalytic domain.

Belongs to the glutamine synthetase family. In terms of assembly, homooctamer. As to expression, roots.

It localises to the cytoplasm. It carries out the reaction L-glutamate + NH4(+) + ATP = L-glutamine + ADP + phosphate + H(+). This is Glutamine synthetase PR-2 from Phaseolus vulgaris (Kidney bean).